Consider the following 207-residue polypeptide: LysM and putative peptidoglycan-binding domain-containing protein 2 (207 aa).

The LysM domain maps to 61–105 (IEHRLSPSDTLQGIALKYGVTMEQIKRANKLFSTDCIFLRKSLNI). The interval 186–207 (AQRLKEEDLRHDDSYATCSYQH) is disordered. The span at 188-199 (RLKEEDLRHDDS) shows a compositional bias: basic and acidic residues.

The polypeptide is LysM and putative peptidoglycan-binding domain-containing protein 2 (lysmd2) (Xenopus tropicalis (Western clawed frog)).